A 740-amino-acid polypeptide reads, in one-letter code: Phosphoribosylformylglycinamidine synthase subunit PurL (740 aa).

The active site involves His53. 2 residues coordinate ATP: Tyr56 and Lys95. Residue Glu97 participates in Mg(2+) binding. Residues Ser98–His101 and Arg120 each bind substrate. Catalysis depends on His99, which acts as the Proton acceptor. Asp121 contacts Mg(2+). Substrate is bound at residue Gln244. Asp272 is a Mg(2+) binding site. Glu316–Gln318 contributes to the substrate binding site. Asp497 and Gly534 together coordinate ATP. Asn535 is a binding site for Mg(2+). Ser537 lines the substrate pocket.

It belongs to the FGAMS family. Monomer. Part of the FGAM synthase complex composed of 1 PurL, 1 PurQ and 2 PurS subunits.

The protein resides in the cytoplasm. It catalyses the reaction N(2)-formyl-N(1)-(5-phospho-beta-D-ribosyl)glycinamide + L-glutamine + ATP + H2O = 2-formamido-N(1)-(5-O-phospho-beta-D-ribosyl)acetamidine + L-glutamate + ADP + phosphate + H(+). It functions in the pathway purine metabolism; IMP biosynthesis via de novo pathway; 5-amino-1-(5-phospho-D-ribosyl)imidazole from N(2)-formyl-N(1)-(5-phospho-D-ribosyl)glycinamide: step 1/2. Part of the phosphoribosylformylglycinamidine synthase complex involved in the purines biosynthetic pathway. Catalyzes the ATP-dependent conversion of formylglycinamide ribonucleotide (FGAR) and glutamine to yield formylglycinamidine ribonucleotide (FGAM) and glutamate. The FGAM synthase complex is composed of three subunits. PurQ produces an ammonia molecule by converting glutamine to glutamate. PurL transfers the ammonia molecule to FGAR to form FGAM in an ATP-dependent manner. PurS interacts with PurQ and PurL and is thought to assist in the transfer of the ammonia molecule from PurQ to PurL. This chain is Phosphoribosylformylglycinamidine synthase subunit PurL, found in Rhodospirillum rubrum (strain ATCC 11170 / ATH 1.1.1 / DSM 467 / LMG 4362 / NCIMB 8255 / S1).